We begin with the raw amino-acid sequence, 241 residues long: LexA repressor (241 aa).

A DNA-binding region (H-T-H motif) is located at residues 41 to 61; it reads FREIGNAAGLKSPSSVKHQLQ. Catalysis depends on for autocatalytic cleavage activity residues Ser-165 and Lys-202.

The protein belongs to the peptidase S24 family. As to quaternary structure, homodimer.

The catalysed reaction is Hydrolysis of Ala-|-Gly bond in repressor LexA.. Its function is as follows. Represses a number of genes involved in the response to DNA damage (SOS response), including recA and lexA. In the presence of single-stranded DNA, RecA interacts with LexA causing an autocatalytic cleavage which disrupts the DNA-binding part of LexA, leading to derepression of the SOS regulon and eventually DNA repair. The protein is LexA repressor of Bifidobacterium longum (strain DJO10A).